The following is a 437-amino-acid chain: Doublesex- and mab-3-related transcription factor A2 (437 aa).

A DNA-binding region (DM) is located at residues 49–96 (CARCRNHGVVSALKGHKRYCRWKDCMCAKCTLIAERQRVMAAQVALRR). The segment at 160-253 (IPRSMTPQLP…DPSSSSLARQ (94 aa)) is disordered. 2 stretches are compositionally biased toward low complexity: residues 179-201 (SEPVSGSAPGASSPEAQPGSGSE) and 223-235 (SPSLISPLSSESG). The DMA domain occupies 254–289 (RTPINILTRVFPAQKRSVLELVLQGCGGDVVQAIEQ).

It belongs to the DMRT family.

The protein resides in the nucleus. Its function is as follows. May be involved in sexual development. This chain is Doublesex- and mab-3-related transcription factor A2 (dmrta2), found in Xenopus laevis (African clawed frog).